The sequence spans 347 residues: Neutral protease 2 homolog MGG_10927 (347 aa).

The first 19 residues, 1 to 19 (MKYSVGITALLATLAQGAA), serve as a signal peptide directing secretion. Residues 20 to 176 (VMSKRDIPLD…RSYLAKRTMV (157 aa)) constitute a propeptide that is removed on maturation. Disulfide bonds link Cys-180/Cys-250 and Cys-257/Cys-275. His-299 is a Zn(2+) binding site. Residue Glu-300 is part of the active site. His-303 lines the Zn(2+) pocket.

This sequence belongs to the peptidase M35 family. The cofactor is Zn(2+).

Its subcellular location is the secreted. It catalyses the reaction Preferential cleavage of bonds with hydrophobic residues in P1'. Also 3-Asn-|-Gln-4 and 8-Gly-|-Ser-9 bonds in insulin B chain.. Secreted metalloproteinase that allows assimilation of proteinaceous substrates. Shows high activities on basic nuclear substrates such as histone and protamine. This is Neutral protease 2 homolog MGG_10927 from Pyricularia oryzae (strain 70-15 / ATCC MYA-4617 / FGSC 8958) (Rice blast fungus).